The chain runs to 528 residues: Tyrosine 3-monooxygenase (528 aa).

A Phosphoserine; by CaMK2 modification is found at serine 19. The interval 33-65 (GQGAPGPSLTGSPWPGTAAPAASYTPTPRSPRF) is disordered. Low complexity predominate over residues 47–59 (PGTAAPAASYTPT). Serine 62 carries the post-translational modification Phosphoserine. The residue at position 71 (serine 71) is a Phosphoserine; by CaMK2 and PKA. Residues histidine 361, histidine 366, and glutamate 406 each coordinate Fe cation. The residue at position 502 (serine 502) is a Phosphoserine.

The protein belongs to the biopterin-dependent aromatic amino acid hydroxylase family. In terms of assembly, homotetramer. Interacts (when phosphorylated at Ser-19) with YWHAG; one YWHAG dimer binds to one TH tetramer and this interaction may influence the phosphorylation and dephosphorylation of other sites. Interacts with NT5DC2; the interaction results in reduced phosphorylation and decreased catalytic activity of TH. Fe(2+) is required as a cofactor. Post-translationally, phosphorylated on Ser-19, Ser-62 and Ser-71 by several protein kinases with different site specificities. Phosphorylation at Ser-62 and Ser-71 leads to an increase of TH activity. Phosphorylation at Ser-71 activates the enzyme and also counteracts the feedback inhibition of TH by catecholamines. Phosphorylation of Ser-19 and Ser-62 triggers the proteasomal degradation of TH through the ubiquitin-proteasome pathway. Phosphorylation at Ser-62 facilitates transport of TH from the soma to the nerve terminals via the microtubule network. Phosphorylation at Ser-19 induces the high-affinity binding to the 14-3-3 protein YWHAG; this interaction may influence the phosphorylation and dephosphorylation of other sites. Ser-19 increases the phosphorylation at Ser-71 in a hierarchical manner, leading to increased activity. In terms of tissue distribution, mainly expressed in the brain and adrenal glands.

The protein localises to the cytoplasm. It is found in the perinuclear region. The protein resides in the nucleus. Its subcellular location is the cell projection. It localises to the axon. The protein localises to the cytoplasmic vesicle. It is found in the secretory vesicle. The protein resides in the synaptic vesicle. It carries out the reaction (6R)-L-erythro-5,6,7,8-tetrahydrobiopterin + L-tyrosine + O2 = (4aS,6R)-4a-hydroxy-L-erythro-5,6,7,8-tetrahydrobiopterin + L-dopa. Its pathway is catecholamine biosynthesis; dopamine biosynthesis; dopamine from L-tyrosine: step 1/2. Inhibited in feedback fashion by the catecholamine neurotransmitters, especially by dopamine in competition with tetrahydrobiopterin. Phosphorylation of several Ser/Thr residues in the N-terminus regulates the catalytic activity. Ser-62 and Ser-71 are readily phosphorylated to activate the catalytic activity. A Cysteine modification induced by N-ethylmaleimide (NEM), inhibits tyrosine 3-monooxygenase activity through the modification of the Cys-207. Its function is as follows. Catalyzes the conversion of L-tyrosine to L-dihydroxyphenylalanine (L-Dopa), the rate-limiting step in the biosynthesis of catecholamines, dopamine, noradrenaline, and adrenaline. Uses tetrahydrobiopterin and molecular oxygen to convert tyrosine to L-Dopa. In addition to tyrosine, is able to catalyze the hydroxylation of phenylalanine and tryptophan with lower specificity. Positively regulates the regression of retinal hyaloid vessels during postnatal development. Lacks catalytic activity. This chain is Tyrosine 3-monooxygenase, found in Homo sapiens (Human).